Consider the following 370-residue polypeptide: MLEFNNSTPLTMGVELELQIVNRRDYNLTRGSDDLLQIINKTEHGYDIKPEITESMIEIATAVHTDHVEMLAELTAMRTLLVTAANKLNLGLAGGGAHPFQHWEDQRIYPTDRYRLVSELYGYLAKQFTVYGQHIHIGCASGDDAIRLTHLLARQIPHFIALSASSPFYQGVDTSFQSSRLTSINAFPLSGTMPFVSDWEAFNTYFIKMSHLGIVASMKDFYWDIRPKPEYGTVEIRVCDTPLAIETAVALGAYAQTLSKYYFAHTELEPTQDTYLTYSYNRFQACRFGLNGALINPITGTQSSIKDDILQTFELLKDVAEELGTTDAIELLRQRVLSGQSDADWLRASYEKSGSLSDAVRQQSAVWMAT.

This sequence belongs to the glutamate--cysteine ligase type 2 family. YbdK subfamily.

The catalysed reaction is L-cysteine + L-glutamate + ATP = gamma-L-glutamyl-L-cysteine + ADP + phosphate + H(+). In terms of biological role, ATP-dependent carboxylate-amine ligase which exhibits weak glutamate--cysteine ligase activity. The chain is Putative glutamate--cysteine ligase 2 from Herminiimonas arsenicoxydans.